We begin with the raw amino-acid sequence, 315 residues long: Aspartate carbamoyltransferase catalytic subunit (315 aa).

Residues Arg64 and Thr65 each contribute to the carbamoyl phosphate site. Position 92 (Lys92) interacts with L-aspartate. Residues Arg114, His142, and Gln145 each coordinate carbamoyl phosphate. Residues Arg176 and Arg230 each coordinate L-aspartate. Carbamoyl phosphate contacts are provided by Gly271 and Pro272.

It belongs to the aspartate/ornithine carbamoyltransferase superfamily. ATCase family. Heterododecamer (2C3:3R2) of six catalytic PyrB chains organized as two trimers (C3), and six regulatory PyrI chains organized as three dimers (R2).

The catalysed reaction is carbamoyl phosphate + L-aspartate = N-carbamoyl-L-aspartate + phosphate + H(+). It participates in pyrimidine metabolism; UMP biosynthesis via de novo pathway; (S)-dihydroorotate from bicarbonate: step 2/3. Catalyzes the condensation of carbamoyl phosphate and aspartate to form carbamoyl aspartate and inorganic phosphate, the committed step in the de novo pyrimidine nucleotide biosynthesis pathway. This Lawsonia intracellularis (strain PHE/MN1-00) protein is Aspartate carbamoyltransferase catalytic subunit.